A 539-amino-acid chain; its full sequence is O-phosphoserine--tRNA(Cys) ligase (539 aa).

Residues 188–190 (HMT), 233–235 (SAS), 275–276 (YY), and Asn327 contribute to the substrate site.

Belongs to the class-II aminoacyl-tRNA synthetase family. O-phosphoseryl-tRNA(Cys) synthetase subfamily. As to quaternary structure, homotetramer. Interacts with SepCysS.

It catalyses the reaction tRNA(Cys) + O-phospho-L-serine + ATP = O-phospho-L-seryl-tRNA(Cys) + AMP + diphosphate. Functionally, catalyzes the attachment of O-phosphoserine (Sep) to tRNA(Cys). This is O-phosphoserine--tRNA(Cys) ligase from Methanosarcina mazei (strain ATCC BAA-159 / DSM 3647 / Goe1 / Go1 / JCM 11833 / OCM 88) (Methanosarcina frisia).